We begin with the raw amino-acid sequence, 277 residues long: Large ribosomal subunit protein uL2 (277 aa).

Positions Val223–Lys277 are disordered.

The protein belongs to the universal ribosomal protein uL2 family. In terms of assembly, part of the 50S ribosomal subunit. Forms a bridge to the 30S subunit in the 70S ribosome.

Its function is as follows. One of the primary rRNA binding proteins. Required for association of the 30S and 50S subunits to form the 70S ribosome, for tRNA binding and peptide bond formation. It has been suggested to have peptidyltransferase activity; this is somewhat controversial. Makes several contacts with the 16S rRNA in the 70S ribosome. The sequence is that of Large ribosomal subunit protein uL2 from Azorhizobium caulinodans (strain ATCC 43989 / DSM 5975 / JCM 20966 / LMG 6465 / NBRC 14845 / NCIMB 13405 / ORS 571).